A 173-amino-acid polypeptide reads, in one-letter code: MKVYRDLYSNDEVCSDAYDHLDPFDNPDLSSVAFEVKTSKVAKGEEDYGIGYNDEEGGDQMNVDPNVEVVVDVVDKFALQSLPLTKKDYSSYIKKYIQRLVATLQEKNPERVEPFKTSVSEFVKHVLANFDDFEFYVGESLDYEAGLVYGYYKGEEVSPRLVFLKDGLVEERY.

The region spanning 1-173 (MKVYRDLYSN…LKDGLVEERY (173 aa)) is the TCTP domain.

The protein belongs to the TCTP family.

Its subcellular location is the cytoplasm. Functionally, involved in calcium binding and microtubule stabilization. This is Translationally-controlled tumor protein homolog (TCTP) from Theileria annulata.